The following is a 188-amino-acid chain: Deoxyuridine 5'-triphosphate nucleotidohydrolase (188 aa).

The tract at residues 1-34 (MGEMTSGVDGHGSTKRTTSEAQKMDFNTDRGSAI) is disordered.

The protein belongs to the dUTPase family. It depends on Mg(2+) as a cofactor.

The catalysed reaction is dUTP + H2O = dUMP + diphosphate + H(+). Its function is as follows. This enzyme is involved in nucleotide metabolism: it produces dUMP, the immediate precursor of thymidine nucleotides and it decreases the intracellular concentration of dUTP so that uracil cannot be incorporated into DNA. The polypeptide is Deoxyuridine 5'-triphosphate nucleotidohydrolase (49) (Ictaluridae (bullhead catfishes)).